Here is a 1429-residue protein sequence, read N- to C-terminus: MFKTKRSLLNSSIAISFAVLGVQAQAETLELQAESFANSGGTYSDGQPNPVTIYNVNGQGAINFVNAGDYVDYNINALGGEYDIEYFVGTGVTSGPNIEVLVDVNGTWQSQGSVAVPYGSWDDFQSLTPSHTVTLPVGTSTVRLLAVGSTWQWNLESFRLTQVSPVEPVGDADNDGVNDNQDLCPNSPSGVTVDNNGCQITGGTDPGGESFVIQMEAFDSTGSDDSRAKGVIIGERGYPQDKHTVVDSVQTTDWVDYSINFPSSANYSVSMLASGQTDHATAVLYLDGTEINEVPVHTGSQADFANFQLAGSVYIASGTHTIRVQAQSSTGEFSWLWFGDALTFTNLDSDGGNGGEATQDADNDGVLDSSDSCPNTPTGEPADVTGCSASQLDDDNDGVSNNVDQCPNTVAGTEVDADGCEVIFADADNDGIEDSQDFCPNTPAGEAVNNSGCGASQLDADNDGVTNNIDQCPNTPAGTQVDASGCETDNGGEPGDSYYHNGQGLLFGRVDGATNFLGEEGYVANPDNYDVTTDLLETDDAIRANSTEVFRGEIYDADGHIAFYEHIDDSVRLYIDGQLVLSNDSWENSSQTTDLNLTPGWHNFELRLGNADGGSGAVSGIGFGIDVDGGTNFVHPSNLSPSMFRASGQVVVDPILPPSGGIYIQLEDFDETGTVGRVASDPNDGFVKGDSNVGWVTNGDWGKYHNVFLEAGTYRAFITVSTPAGGSYGARVDIDGEPFAWGYFDSTGGWDIAAEYELYGGHLVVESTGNHTLHVEAVGGSDWQWSGDLVRLAKVSDSAVKQPRVYNPNEHIVAEIQGPATGLQYLKTPVEIPLANKVLKSDVWYTYPQNRNLVVDGDTPYADFGATGAFWGHPPEHDFYDDTVIMDWAVNVVDDFQSEGFEYTARGEFDWGYGWFTEFTTNPQPHYVQTLDGRNVRMTFMGYLSHDGYNNNWLSNHSPAFVPFMKSQVDQILKANPDKLMFDTQTNSTRSTDMRTFGGDFSPYAMENFRVWLLKKYSNAQLVSMGINDITSFDYGAYLRAQGITHTDWSNAGDTISGNIPMMEDFIYFNRDVWNQKFAEVLEYIRQQRPNIEIGASTHLFESRGYIFNENITFLSGELNLGARTSISELPTNILVHLKGAQAVDKTLAYFPYPWEFDELRIQNAPRFGRGWVAQAYAYGGLFSIPANVWVGGEVFTWSPGADNYRDIYQFVRAQANLLDGYTSYAKAGYVHAMFSSMKAGFIDGGNQVQSSVKILTEDNINFDMLVFGDAGYPVVPRQADFDKFEYIFYDGDLNYLTAEQQAVLDAQGSKVKHIGQRGTIAGLQINVSINGSVSNETVSAVSRIHETDSTAPYVVHLINRPFAGGVTPILNNVEVAIPASYFPQGVTSAKLHLPDGSSSTVAVSTNANGDTVVSVSNLEVWGILELAH.

The first 26 residues, 1-26, serve as a signal peptide directing secretion; it reads MFKTKRSLLNSSIAISFAVLGVQAQA. CBM6 domains follow at residues 29 to 161 and 211 to 345; these read LELQ…FRLT and FVIQ…LTFT. Disordered stretches follow at residues 349 to 400 and 474 to 495; these read SDGG…DGVS and NTPA…GEPG. Residues 369–378 show a composition bias toward polar residues; that stretch reads SSDSCPNTPT. One can recognise a PA14 domain in the interval 490-638; that stretch reads NGGEPGDSYY…GGTNFVHPSN (149 aa). The region spanning 662–793 is the CBM6 3 domain; it reads IYIQLEDFDE…QWSGDLVRLA (132 aa).

Belongs to the glycosyl hydrolase 96 family. Homodimer. Ca(2+) is required as a cofactor.

The enzyme catalyses Endohydrolysis of 1,3-alpha-L-galactosidic linkages in agarose, yielding agarotetraose as the major product.. In terms of biological role, alpha-agarase. Does not hydrolyze agarotetraose, agarohexaose, kappa-carrageenan, iota-carrageenan or lambda-carrageenan. In Alteromonas agarilytica, this protein is Alpha-agarase.